The primary structure comprises 487 residues: MASKLFLAAALLQGALSSPLAVEERQACAAQWGQCGGQDYTGPTCCQSGSTCVVSNQWYSQCLPGSSNPTTTSRTSTSSSSSTSRTSSSTSRPPSSVPTTPTSVPPTITTTPTTTPTGGSGPGTTASFTGNPFAGVNLFPNKFYSSEVHTLAIPSLTGSLVAKASAVAQVPSFQWLDIAAKVETLMPGALADVRAANAAGGNYAAQLVVYDLPDRDCAAAASNGEFSIADGGVVKYKAYIDAIRKQLLAYSDVRTILVIEPDSLANMVTNMGVPKCAGAKDAYLECTIYAVKQLNLPHVAMYLDGGHAGWLGWPANLQPAADLFGKLYADAGKPSQLRGMATNVANYNAWDLTTAPSYTTPNPNFDEKKYISAFAPLLAAKGWSAHFIIDQGRSGKQPTGQKEWGHWCNQQGVGFGRRPSANTGSELADAFVWIKPGGECDGVSDPTAPRFDHFCGTDYGAMSDAPQAGQWFQKYFEMLLTNANPPL.

An N-terminal signal peptide occupies residues Met1–Ser17. The 37-residue stretch at Ala27–Leu63 folds into the CBM1 domain. 2 disulfides stabilise this stretch: Cys35/Cys52 and Cys46/Cys62. A compositionally biased stretch (low complexity) spans Pro64–Thr117. Residues Pro64–Ser127 are disordered. Residues Trp175 and Asp177 each coordinate substrate. Asp216 is a catalytic residue. Asp262 functions as the Proton donor in the catalytic mechanism. The substrate site is built by His307, Trp310, Asn346, Trp407, Lys435, and Glu439. Asp441 (proton acceptor) is an active-site residue.

It belongs to the glycosyl hydrolase 6 (cellulase B) family.

The protein resides in the secreted. It carries out the reaction Hydrolysis of (1-&gt;4)-beta-D-glucosidic linkages in cellulose and cellotetraose, releasing cellobiose from the non-reducing ends of the chains.. In terms of biological role, exoglucanase that plays an important function in biomass degradation by catalyzing the hydrolysis of the non-reducing end beta-1,4-glucosidic linkages in cellulose and cellotetraose to release cellobiose. Shows higher hydrolytic activities on phosphoric acid-swollen cellulose (PSC), beta-glucan, and cellooligosaccharide derivatives than on cellulose, of which the best substrates were cellooligosaccharides. In Pyricularia oryzae (strain 70-15 / ATCC MYA-4617 / FGSC 8958) (Rice blast fungus), this protein is 1,4-beta-D-glucan cellobiohydrolase CEL6A.